We begin with the raw amino-acid sequence, 247 residues long: Cell division protein ZapD (247 aa).

This sequence belongs to the ZapD family. In terms of assembly, interacts with FtsZ.

It is found in the cytoplasm. Cell division factor that enhances FtsZ-ring assembly. Directly interacts with FtsZ and promotes bundling of FtsZ protofilaments, with a reduction in FtsZ GTPase activity. This chain is Cell division protein ZapD, found in Escherichia coli O7:K1 (strain IAI39 / ExPEC).